A 492-amino-acid polypeptide reads, in one-letter code: MAKDIYKTFKRSVSGIVGGNNINGEGSSSPSTSAPQVKYRGGTGRTWIHPPDYLINGHVEYVARFLGCVETPKANGSDVAREAIHAIRFQRDLKRSEQTRETAKLQKVEIRISIDNVIIADIKTKAPMYTFPLGRISFCADDKDDKRMFSFIARAEGASGKPSCYAFTSEKLAEDITLTIGEAFDLAYKRFLDKNRTSLENQKQIYILKKKIVELETENQVLIERLAEALRANSKADYENTGPPIYPGLGPPALPLSPMPQGPPPNIPPSSIYSMPRANDLPPTEMAPTLPQISTSSNGASPSVSPASTSPSGPAPSIPPPRPPALAPPPPVAPRRNPVVSPKNSTAGLLDGLELGSAEPAKKAPSNIFDDSFDPRAGEKKSTAAEYNPFGADFLSGIQNGKEAPPSASAELLASEAIARLPKPESSSVPPKKTAAEYDAMINEVEKKLAAMSSGSFEFGQLQTGDLGGIEGESDYGTPSDRLNPKMMNLKQ.

Over residues 19–29 (GNNINGEGSSS) the composition is skewed to low complexity. The tract at residues 19–38 (GNNINGEGSSSPSTSAPQVK) is disordered. A PID domain is found at 55–215 (INGHVEYVAR…YILKKKIVEL (161 aa)). Disordered regions lie at residues 241 to 385 (TGPP…STAA) and 464 to 492 (TGDLGGIEGESDYGTPSDRLNPKMMNLKQ). Residues 244–268 (PIYPGLGPPALPLSPMPQGPPPNIP) show a composition bias toward pro residues. A compositionally biased stretch (low complexity) spans 300-312 (ASPSVSPASTSPS). Residues 313 to 333 (GPAPSIPPPRPPALAPPPPVA) show a composition bias toward pro residues. Residues 373–383 (FDPRAGEKKST) show a composition bias toward basic and acidic residues.

It belongs to the ced-6 family. In terms of assembly, homodimer. Interacts with ced-1. Interacts with E3 ubiquitin-protein ligase trim-21. As to expression, detected in gonadal sheath cells.

It localises to the cytoplasm. Its function is as follows. May function as an adapter protein in a pathway that mediates recognition and phagocytosis of apoptotic cells during normal development. Promotes engulfment of cells at both early and late stages of apoptosis. Required for actin reorganization around apoptotic cells. Plays a role in protecting dopaminergic neurons from oxidative stress-induced degeneration. Mediates recruitment of E3 ubiquitin-protein ligase trim-21 to the apoptotic cell surface which promotes ubiquitination and degradation of ced-1. This is Cell death protein 6 from Caenorhabditis elegans.